The chain runs to 168 residues: Inorganic pyrophosphatase (168 aa).

Substrate contacts are provided by Lys-23, Arg-37, and Tyr-49. Positions 59, 64, and 96 each coordinate Mg(2+). Residue Tyr-133 participates in substrate binding.

It belongs to the PPase family. As to quaternary structure, homohexamer. It depends on Mg(2+) as a cofactor.

The protein resides in the cytoplasm. It carries out the reaction diphosphate + H2O = 2 phosphate + H(+). Its function is as follows. Catalyzes the hydrolysis of inorganic pyrophosphate (PPi) forming two phosphate ions. The polypeptide is Inorganic pyrophosphatase (Methanosarcina acetivorans (strain ATCC 35395 / DSM 2834 / JCM 12185 / C2A)).